An 85-amino-acid polypeptide reads, in one-letter code: Makatoxin-2 (85 aa).

A signal peptide spans 1 to 19; it reads MNYLIVISFALLLMTSVES. Residues 21–83 enclose the LCN-type CS-alpha/beta domain; the sequence is RDAYIADSEN…VPIRIPGPCR (63 aa). 4 cysteine pairs are disulfide-bonded: Cys-31/Cys-82, Cys-35/Cys-55, Cys-41/Cys-65, and Cys-45/Cys-67.

This sequence belongs to the long (4 C-C) scorpion toxin superfamily. Sodium channel inhibitor family. Alpha subfamily. Expressed by the venom gland.

It is found in the secreted. Its function is as follows. This protein markedly relaxes the rat carbachol-precontracted anococcygeus muscle. This relaxation is inhibited by the inhibitor of nitric oxide (NO) synthase, N-nitro-L-arginine methyl ester (L-NAME), suggesting that the response induced by this protein is NO-mediated. The sequence is that of Makatoxin-2 from Olivierus martensii (Manchurian scorpion).